Reading from the N-terminus, the 303-residue chain is GTPase Era (303 aa).

Residues 7–174 form the Era-type G domain; the sequence is KSGFVAILGR…IDTLSEKLDE (168 aa). The G1 stretch occupies residues 15–22; that stretch reads GRPNVGKS. 15–22 is a GTP binding site; sequence GRPNVGKS. The interval 41–45 is G2; the sequence is QTTRN. The segment at 62–65 is G3; sequence DTPG. Residues 62-66 and 124-127 contribute to the GTP site; these read DTPGI and NKID. A G4 region spans residues 124–127; the sequence is NKID. The tract at residues 153–155 is G5; that stretch reads ISA. Residues 205–283 form the KH type-2 domain; it reads TREEVPHSIA…YLETWVKIKN (79 aa).

It belongs to the TRAFAC class TrmE-Era-EngA-EngB-Septin-like GTPase superfamily. Era GTPase family. As to quaternary structure, monomer.

Its subcellular location is the cytoplasm. It is found in the cell membrane. Its function is as follows. An essential GTPase that binds both GDP and GTP, with rapid nucleotide exchange. Plays a role in 16S rRNA processing and 30S ribosomal subunit biogenesis and possibly also in cell cycle regulation and energy metabolism. The polypeptide is GTPase Era (Lactococcus lactis subsp. lactis (strain IL1403) (Streptococcus lactis)).